A 162-amino-acid chain; its full sequence is Protein-export protein SecB (162 aa).

This sequence belongs to the SecB family. As to quaternary structure, homotetramer, a dimer of dimers. One homotetramer interacts with 1 SecA dimer.

It is found in the cytoplasm. One of the proteins required for the normal export of preproteins out of the cell cytoplasm. It is a molecular chaperone that binds to a subset of precursor proteins, maintaining them in a translocation-competent state. It also specifically binds to its receptor SecA. The sequence is that of Protein-export protein SecB from Legionella pneumophila (strain Paris).